Reading from the N-terminus, the 106-residue chain is uncharacterized protein (106 aa).

Positions 1–22 (MKKHPNLLLGFSVYLSAGTKLT) are cleaved as a signal peptide. Positions 23–46 (IPPEAEQHTAPSDNNKRKRAKCDD) are disordered.

This is an uncharacterized protein from Arabidopsis thaliana (Mouse-ear cress).